A 51-amino-acid polypeptide reads, in one-letter code: Mitochondrial import receptor subunit TOM5 homolog (51 aa).

M1 bears the N-acetylmethionine mark. K10 participates in a covalent cross-link: Glycyl lysine isopeptide (Lys-Gly) (interchain with G-Cter in SUMO2). Residues 27-45 (SIRNFLIYVALLRVTPFIL) form a helical membrane-spanning segment.

Belongs to the Tom5 family. In terms of assembly, forms part of the preprotein translocase complex of the outer mitochondrial membrane (TOM complex) which consists of at least 7 different proteins (TOMM5, TOMM6, TOMM7, TOMM20, TOMM22, TOMM40 and TOMM70).

The protein resides in the mitochondrion outer membrane. This Bos taurus (Bovine) protein is Mitochondrial import receptor subunit TOM5 homolog.